Here is a 165-residue protein sequence, read N- to C-terminus: uncharacterized protein (165 aa).

Residues 4–26 form a helical membrane-spanning segment; that stretch reads FVIGTMIALAGLLVGGGVGSYFT.

It localises to the membrane. This is an uncharacterized protein from Aquifex aeolicus (strain VF5).